The following is a 173-amino-acid chain: Crossover junction endodeoxyribonuclease RuvC (173 aa).

Active-site residues include D8, E67, and D139. 3 residues coordinate Mg(2+): D8, E67, and D139.

It belongs to the RuvC family. As to quaternary structure, homodimer which binds Holliday junction (HJ) DNA. The HJ becomes 2-fold symmetrical on binding to RuvC with unstacked arms; it has a different conformation from HJ DNA in complex with RuvA. In the full resolvosome a probable DNA-RuvA(4)-RuvB(12)-RuvC(2) complex forms which resolves the HJ. It depends on Mg(2+) as a cofactor.

The protein localises to the cytoplasm. The catalysed reaction is Endonucleolytic cleavage at a junction such as a reciprocal single-stranded crossover between two homologous DNA duplexes (Holliday junction).. The RuvA-RuvB-RuvC complex processes Holliday junction (HJ) DNA during genetic recombination and DNA repair. Endonuclease that resolves HJ intermediates. Cleaves cruciform DNA by making single-stranded nicks across the HJ at symmetrical positions within the homologous arms, yielding a 5'-phosphate and a 3'-hydroxyl group; requires a central core of homology in the junction. The consensus cleavage sequence is 5'-(A/T)TT(C/G)-3'. Cleavage occurs on the 3'-side of the TT dinucleotide at the point of strand exchange. HJ branch migration catalyzed by RuvA-RuvB allows RuvC to scan DNA until it finds its consensus sequence, where it cleaves and resolves the cruciform DNA. The sequence is that of Crossover junction endodeoxyribonuclease RuvC from Shewanella loihica (strain ATCC BAA-1088 / PV-4).